Here is a 199-residue protein sequence, read N- to C-terminus: uncharacterized protein (199 aa).

To U.parvum UU376.

This is an uncharacterized protein from Ureaplasma parvum serovar 3 (strain ATCC 700970).